We begin with the raw amino-acid sequence, 315 residues long: Pantothenate synthetase (315 aa).

Position 45 to 52 (45 to 52 (MGALHEGH)) interacts with ATP. H52 (proton donor) is an active-site residue. Q77 provides a ligand contact to (R)-pantoate. Q77 serves as a coordination point for beta-alanine. Residue 163-166 (GEKD) coordinates ATP. Residue Q169 participates in (R)-pantoate binding. Residues V192 and 200 to 203 (MSSR) each bind ATP.

The protein belongs to the pantothenate synthetase family. In terms of assembly, homodimer.

Its subcellular location is the cytoplasm. The catalysed reaction is (R)-pantoate + beta-alanine + ATP = (R)-pantothenate + AMP + diphosphate + H(+). Its pathway is cofactor biosynthesis; (R)-pantothenate biosynthesis; (R)-pantothenate from (R)-pantoate and beta-alanine: step 1/1. Functionally, catalyzes the condensation of pantoate with beta-alanine in an ATP-dependent reaction via a pantoyl-adenylate intermediate. This Mycobacterium ulcerans (strain Agy99) protein is Pantothenate synthetase.